Reading from the N-terminus, the 121-residue chain is Large ribosomal subunit protein bL12 (121 aa).

This sequence belongs to the bacterial ribosomal protein bL12 family. In terms of assembly, homodimer. Part of the ribosomal stalk of the 50S ribosomal subunit. Forms a multimeric L10(L12)X complex, where L10 forms an elongated spine to which 2 to 4 L12 dimers bind in a sequential fashion. Binds GTP-bound translation factors.

Its function is as follows. Forms part of the ribosomal stalk which helps the ribosome interact with GTP-bound translation factors. Is thus essential for accurate translation. The chain is Large ribosomal subunit protein bL12 from Pseudomonas fluorescens (strain SBW25).